We begin with the raw amino-acid sequence, 220 residues long: GTP cyclohydrolase 1 (220 aa).

Cys-109, His-112, and Cys-180 together coordinate Zn(2+).

Belongs to the GTP cyclohydrolase I family. In terms of assembly, toroid-shaped homodecamer, composed of two pentamers of five dimers.

The catalysed reaction is GTP + H2O = 7,8-dihydroneopterin 3'-triphosphate + formate + H(+). It participates in cofactor biosynthesis; 7,8-dihydroneopterin triphosphate biosynthesis; 7,8-dihydroneopterin triphosphate from GTP: step 1/1. This chain is GTP cyclohydrolase 1, found in Yersinia pseudotuberculosis serotype O:1b (strain IP 31758).